The chain runs to 348 residues: 4-hydroxy-3-methylbut-2-en-1-yl diphosphate synthase (flavodoxin) (348 aa).

Residues Cys263, Cys266, Cys298, and Glu305 each coordinate [4Fe-4S] cluster.

This sequence belongs to the IspG family. [4Fe-4S] cluster is required as a cofactor.

The catalysed reaction is (2E)-4-hydroxy-3-methylbut-2-enyl diphosphate + oxidized [flavodoxin] + H2O + 2 H(+) = 2-C-methyl-D-erythritol 2,4-cyclic diphosphate + reduced [flavodoxin]. The protein operates within isoprenoid biosynthesis; isopentenyl diphosphate biosynthesis via DXP pathway; isopentenyl diphosphate from 1-deoxy-D-xylulose 5-phosphate: step 5/6. Converts 2C-methyl-D-erythritol 2,4-cyclodiphosphate (ME-2,4cPP) into 1-hydroxy-2-methyl-2-(E)-butenyl 4-diphosphate. The chain is 4-hydroxy-3-methylbut-2-en-1-yl diphosphate synthase (flavodoxin) from Dehalococcoides mccartyi (strain CBDB1).